The primary structure comprises 147 residues: Hemoglobin subunit epsilon-2 (147 aa).

One can recognise a Globin domain in the interval 3–147 (HFTTEENVAV…VANALTHKYH (145 aa)). The heme b site is built by Tyr-64 and His-93.

The protein belongs to the globin family. In terms of tissue distribution, red blood cells.

Functionally, hemoglobin epsilon chain is a beta-type chain found in early embryos. The sequence is that of Hemoglobin subunit epsilon-2 (HBE2) from Bos taurus (Bovine).